The sequence spans 166 residues: Large ribosomal subunit protein bL19 (166 aa).

The protein belongs to the bacterial ribosomal protein bL19 family.

Its function is as follows. This protein is located at the 30S-50S ribosomal subunit interface and may play a role in the structure and function of the aminoacyl-tRNA binding site. The chain is Large ribosomal subunit protein bL19 from Chelativorans sp. (strain BNC1).